Reading from the N-terminus, the 388-residue chain is Sex-determination protein fem-3 (388 aa).

Repeat copies occupy residues 7 to 10, 110 to 113, 141 to 144, 234 to 237, 284 to 287, and 371 to 374.

As to quaternary structure, component of a complex containing fem-1, fem-2 and fem-3. Interacts with fem-1 and fem-2 (via N-terminus). Part of a E3 ubiquitin-protein ligase complex, at least composed of cul-2, elc-1, tra-1, fem-1, fem-2 and fem-3; mediates the ubiquitination and subsequent proteasomal degradation of tra-1. Interacts with tra-1. Interacts with sel-10. Interacts with tra-2.

Its function is as follows. Required for male development. In XO (male) animals, fem-3 directs male differentiation in all tissues. In XX (hermaphrodite) animals, it specifies the first 80 or so germ cells to be sperm. Negatively regulates male development when bound to tra-2. Together with fem-2 associates with the CBC(fem-1) E3 ubiquitin-protein ligase complex which mediates the ubiquitination and subsequent proteasomal degradation of tra-1. In Caenorhabditis elegans, this protein is Sex-determination protein fem-3 (fem-3).